The chain runs to 315 residues: tRNA dimethylallyltransferase (315 aa).

15–22 (GPTACGKS) serves as a coordination point for ATP. 17–22 (TACGKS) contributes to the substrate binding site. Interaction with substrate tRNA regions lie at residues 40–43 (DSAL) and 162–166 (QRLIR).

Belongs to the IPP transferase family. As to quaternary structure, monomer. The cofactor is Mg(2+).

The catalysed reaction is adenosine(37) in tRNA + dimethylallyl diphosphate = N(6)-dimethylallyladenosine(37) in tRNA + diphosphate. Functionally, catalyzes the transfer of a dimethylallyl group onto the adenine at position 37 in tRNAs that read codons beginning with uridine, leading to the formation of N6-(dimethylallyl)adenosine (i(6)A). The protein is tRNA dimethylallyltransferase of Buchnera aphidicola subsp. Acyrthosiphon pisum (strain APS) (Acyrthosiphon pisum symbiotic bacterium).